We begin with the raw amino-acid sequence, 251 residues long: Malonyl-[acyl-carrier protein] O-methyltransferase (251 aa).

This sequence belongs to the methyltransferase superfamily.

It catalyses the reaction malonyl-[ACP] + S-adenosyl-L-methionine = malonyl-[ACP] methyl ester + S-adenosyl-L-homocysteine. The protein operates within cofactor biosynthesis; biotin biosynthesis. Converts the free carboxyl group of a malonyl-thioester to its methyl ester by transfer of a methyl group from S-adenosyl-L-methionine (SAM). It allows to synthesize pimeloyl-ACP via the fatty acid synthetic pathway. The chain is Malonyl-[acyl-carrier protein] O-methyltransferase from Salmonella typhimurium (strain LT2 / SGSC1412 / ATCC 700720).